Consider the following 486-residue polypeptide: Alpha-L-arabinofuranosidase B (486 aa).

An N-terminal signal peptide occupies residues 1–25; that stretch reads MLSLKAVLRFASVAVAVVLPTLAQA. Asn42 carries N-linked (GlcNAc...) asparagine glycosylation. The tract at residues 45–342 is catalytic; that stretch reads LVKQRADPQI…KLYWRSDGTP (298 aa). Asp51 serves as the catalytic Proton acceptor. Catalysis depends on Glu229, which acts as the Proton donor. N-linked (GlcNAc...) asparagine glycosylation is found at Asn302, Asn416, and Asn426. An ABD region spans residues 359–467; that stretch reads SSADQTLYVG…AGSYLVSGGN (109 aa).

Belongs to the glycosyl hydrolase 43 family.

It is found in the secreted. It carries out the reaction Hydrolysis of terminal non-reducing alpha-L-arabinofuranoside residues in alpha-L-arabinosides.. The protein operates within glycan metabolism; L-arabinan degradation. Functionally, secreted arabinofuranosidase that causes degradation of rice cell wall components during infection. Required for virulence. In Pyricularia oryzae (strain 70-15 / ATCC MYA-4617 / FGSC 8958) (Rice blast fungus), this protein is Alpha-L-arabinofuranosidase B.